Reading from the N-terminus, the 200-residue chain is Small ribosomal subunit protein uS4 (200 aa).

The segment at T22 to R42 is disordered. Positions S92–K152 constitute an S4 RNA-binding domain.

The protein belongs to the universal ribosomal protein uS4 family. As to quaternary structure, part of the 30S ribosomal subunit. Contacts protein S5. The interaction surface between S4 and S5 is involved in control of translational fidelity.

One of the primary rRNA binding proteins, it binds directly to 16S rRNA where it nucleates assembly of the body of the 30S subunit. Its function is as follows. With S5 and S12 plays an important role in translational accuracy. This is Small ribosomal subunit protein uS4 (rpsD) from Geobacillus stearothermophilus (Bacillus stearothermophilus).